The chain runs to 862 residues: Transcription initiation factor TFIID subunit 4B (862 aa).

Residues 100–241 (NTTTIQFPAN…TPSNEPNLKA (142 aa)) form a sufficient for interaction with ZNF628 region. The segment covering 219 to 237 (VTTLKPSSLGASSTPSNEP) has biased composition (polar residues). A disordered region spans residues 219 to 239 (VTTLKPSSLGASSTPSNEPNL). The 98-residue stretch at 256-353 (LENVKKCKNF…CVQQTSSDMV (98 aa)) folds into the TAFH domain. Residues 511 to 533 (PGPVLSQPAGIPQAVQVKQLVVQ) form a required for interaction with P65/RELA region. The Nuclear export signal signature appears at 516 to 556 (SQPAGIPQAVQVKQLVVQQPSGGNEKQVTTISHSSTLTIQK). Residue Ser-595 is modified to Phosphoserine. Residues 653–702 (PFLFIGALQKRILDIGKKHDITELNSDAVNLISQATQERLRGLLEKLTAI) enclose the Histone-fold domain. Residues 722-787 (TRSQLKFLEK…LAQIQHRDAN (66 aa)) adopt a coiled-coil conformation. Positions 830–862 (PRITRICLRDLIFCMEQEREMKYSRALYLALLK) are required for interaction with TAF12.

It belongs to the TAF4 family. In terms of assembly, TFIID is composed of TATA binding protein (TBP) and a number of TBP-associated factors (TAFs). Heterodimerizes with TAF12/TFII20 via the C-terminal H2A-like histone-fold domain. This heterodimer forms a histone-like octamer with the TAF6/TAFII70-TAF9/TAFII31 heterodimer. Interacts with P65/RELA homodimers and P65/RELA-REL heterodimers. Interaction with POU2AF1, via its C-terminal activation domain, is required for octamer-dependent transcription. Interacts with ZNF628. In terms of processing, under stimulation by forskolin, Isoform 1 is phosphorylated by protein kinase A (PKA). In terms of tissue distribution, preferentially expressed in ovarian granulosa cells (at protein level). Highly expressed in B-cells.

It is found in the nucleus. The protein resides in the cytoplasm. Cell type-specific subunit of the general transcription factor TFIID that may function as a gene-selective coactivator in certain cells. TFIID is a multimeric protein complex that plays a central role in mediating promoter responses to various activators and repressors. TAF4B is a transcriptional coactivator of the p65/RELA NF-kappa-B subunit. Involved in the activation of a subset of antiapoptotic genes including TNFAIP3. May be involved in regulating folliculogenesis. Through interaction with OCBA/POU2AF1, acts as a coactivator of B-cell-specific transcription. Plays a role in spermiogenesis and oogenesis. The polypeptide is Transcription initiation factor TFIID subunit 4B (TAF4B) (Homo sapiens (Human)).